The sequence spans 471 residues: Ubiquitin carboxyl-terminal hydrolase calypso (471 aa).

Positions 45 to 276 constitute a UCH catalytic domain; that stretch reads GWLELESDPG…IRFNLMAVVP (232 aa). The active-site Nucleophile is the C131. H213 acts as the Proton donor in catalysis. Coiled-coil stretches lie at residues 240 to 256 and 298 to 324; these read WEDSEDWTDKFRRVMAE and GTLQKLLKADEQGESGNGDSQRPDTPT. Residues 307–326 form a disordered region; the sequence is DEQGESGNGDSQRPDTPTTL. The segment covering 314–326 has biased composition (polar residues); sequence NGDSQRPDTPTTL. One can recognise a ULD domain in the interval 375–403; it reads NYDKFICTFLSMLAHQGVLGELVSQHLLP. Residues 405-471 are positively charged C-terminal tail required for binding nucleosomes; the sequence is KKVSGQGAAN…KGRNKCRKRK (67 aa). The disordered stretch occupies residues 412 to 471; the sequence is AANRISKQSTTASAGGSTAAGTASTPKTQQQQAAAAKNGKSPSKTPGRRRKGRNKCRKRK. Positions 420-447 are enriched in low complexity; it reads STTASAGGSTAAGTASTPKTQQQQAAAA. The segment covering 457–471 has biased composition (basic residues); sequence PGRRRKGRNKCRKRK.

This sequence belongs to the peptidase C12 family. BAP1 subfamily. Catalytic component of the polycomb repressive deubiquitinase (PR-DUB) complex, at least composed of caly/calypso, Asx and sba (MBD5/6 homolog). The PR-DUB complex associates with nucleosomes to mediate deubiquitination of histone H2AK118ub1 substrates; the association requires the positively charged C-terminal tail of caly, probably due to direct binding of DNA. Interacts (via ULD domain) with Asx (via DEUBAD domain); the interaction produces a stable heterodimer with a composite binding site for ubiquitin. Homodimerizes (via coiled-coil hinge-region between the UCH and ULD domains) to mediate assembly of 2 copies of the caly-Asx heterodimer into a bisymmetric tetramer; dimerization enhances PR-DUB association with nucleosomes.

The protein localises to the nucleus. It carries out the reaction Thiol-dependent hydrolysis of ester, thioester, amide, peptide and isopeptide bonds formed by the C-terminal Gly of ubiquitin (a 76-residue protein attached to proteins as an intracellular targeting signal).. Catalytic component of the polycomb repressive deubiquitinase (PR-DUB) complex, a complex that specifically mediates deubiquitination of histone H2A monoubiquitinated at 'Lys-119' (H2AK118ub1). Mediates bisymmetric organization of the PR-DUB complex and is involved in association with nucleosomes to mediate deubiquitination. Does not deubiquitinate monoubiquitinated histone H2B. Required to maintain the transcriptionally repressive state of homeotic genes throughout development. The PR-DUB complex has weak or no activity toward 'Lys-48'- and 'Lys-63'-linked polyubiquitin chains. Polycomb group (PcG) protein. The polypeptide is Ubiquitin carboxyl-terminal hydrolase calypso (Drosophila melanogaster (Fruit fly)).